Reading from the N-terminus, the 448-residue chain is Eukaryotic translation initiation factor 3 subunit E (448 aa).

The 170-residue stretch at 254 to 423 folds into the PCI domain; the sequence is TDLFFSPAYI…GTVIMNHPPQ (170 aa).

This sequence belongs to the eIF-3 subunit E family. In terms of assembly, component of the eukaryotic translation initiation factor 3 (eIF-3) complex.

It localises to the cytoplasm. Functionally, component of the eukaryotic translation initiation factor 3 (eIF-3) complex, which is involved in protein synthesis of a specialized repertoire of mRNAs and, together with other initiation factors, stimulates binding of mRNA and methionyl-tRNAi to the 40S ribosome. The eIF-3 complex specifically targets and initiates translation of a subset of mRNAs involved in cell proliferation. The chain is Eukaryotic translation initiation factor 3 subunit E (int6) from Emericella nidulans (strain FGSC A4 / ATCC 38163 / CBS 112.46 / NRRL 194 / M139) (Aspergillus nidulans).